A 193-amino-acid polypeptide reads, in one-letter code: Copper-binding lipoprotein NosL (193 aa).

The first 19 residues, 1–19 (MRTRLRFVLVAAALALLSA), serve as a signal peptide directing secretion. A lipid anchor (N-palmitoyl cysteine) is attached at cysteine 20. Cysteine 20 carries the S-diacylglycerol cysteine lipid modification.

Belongs to the NosL family. In terms of assembly, monomer. Apo-NosL can form homodimers.

It is found in the cell membrane. May act as a metallochaperone involved in nitrous oxide reductase assembly. Specifically binds Cu(+). The sequence is that of Copper-binding lipoprotein NosL from Achromobacter cycloclastes.